The following is a 209-amino-acid chain: Adenylate kinase (209 aa).

Residue 10–15 coordinates ATP; it reads GAGKGT. Residues 30–59 form an NMP region; that stretch reads STGDLFRAAIKEQTDLGKKVKAVIDSGALV. AMP contacts are provided by residues Thr31, Arg36, 57 to 59, 85 to 88, and Gln92; these read ALV and GFPR. Positions 121 to 158 are LID; that stretch reads GRRVCSSCGQSFHIEFVKPKKEGICDSCSGDLMIRPDD. An ATP-binding site is contributed by Arg122. Residues Cys125 and Cys128 each coordinate Zn(2+). An ATP-binding site is contributed by 131 to 132; sequence SF. Zn(2+) contacts are provided by Cys145 and Cys148. The AMP site is built by Arg155 and Arg166. Pro194 contributes to the ATP binding site.

Belongs to the adenylate kinase family. As to quaternary structure, monomer.

It localises to the cytoplasm. It carries out the reaction AMP + ATP = 2 ADP. It functions in the pathway purine metabolism; AMP biosynthesis via salvage pathway; AMP from ADP: step 1/1. In terms of biological role, catalyzes the reversible transfer of the terminal phosphate group between ATP and AMP. Plays an important role in cellular energy homeostasis and in adenine nucleotide metabolism. This Treponema denticola (strain ATCC 35405 / DSM 14222 / CIP 103919 / JCM 8153 / KCTC 15104) protein is Adenylate kinase.